Consider the following 250-residue polypeptide: Methionine aminopeptidase (250 aa).

A substrate-binding site is contributed by histidine 77. The a divalent metal cation site is built by aspartate 94, aspartate 105, and histidine 169. Position 176 (histidine 176) interacts with substrate. Residues glutamate 202 and glutamate 235 each coordinate a divalent metal cation.

The protein belongs to the peptidase M24A family. Methionine aminopeptidase type 1 subfamily. As to quaternary structure, monomer. It depends on Co(2+) as a cofactor. Zn(2+) is required as a cofactor. The cofactor is Mn(2+). Requires Fe(2+) as cofactor.

It catalyses the reaction Release of N-terminal amino acids, preferentially methionine, from peptides and arylamides.. Functionally, removes the N-terminal methionine from nascent proteins. The N-terminal methionine is often cleaved when the second residue in the primary sequence is small and uncharged (Met-Ala-, Cys, Gly, Pro, Ser, Thr, or Val). Requires deformylation of the N(alpha)-formylated initiator methionine before it can be hydrolyzed. The polypeptide is Methionine aminopeptidase (Mycoplasmoides gallisepticum (strain R(low / passage 15 / clone 2)) (Mycoplasma gallisepticum)).